Consider the following 885-residue polypeptide: Cytosolic carboxypeptidase-like protein 5 (885 aa).

One can recognise a Peptidase M14 domain in the interval Tyr-150 to Ala-576. Zn(2+)-binding residues include His-247 and Glu-250. Disordered regions lie at residues Ser-341 to Glu-364 and Glu-392 to Pro-428. Residues Ala-344–Pro-356 are compositionally biased toward polar residues. Basic and acidic residues predominate over residues Ser-393–Glu-408. A compositionally biased stretch (polar residues) spans Ser-411–Pro-428. His-440 serves as a coordination point for Zn(2+). The Proton donor/acceptor role is filled by Glu-522. Residues Ser-606 to Thr-668 show a composition bias toward polar residues. 2 disordered regions span residues Ser-606–Leu-788 and Ala-866–Thr-885. Over residues Arg-682–Arg-691 the composition is skewed to basic and acidic residues. Low complexity predominate over residues Leu-712 to Gly-749.

This sequence belongs to the peptidase M14 family. Zn(2+) is required as a cofactor.

It localises to the cytoplasm. The protein localises to the cytosol. It is found in the nucleus. Its subcellular location is the cytoskeleton. The protein resides in the spindle. It localises to the midbody. The enzyme catalyses gamma-L-glutamyl-L-glutamyl-[protein] + H2O = L-glutamyl-[protein] + L-glutamate. It carries out the reaction (L-glutamyl)(n+1)-gamma-L-glutamyl-L-glutamyl-[protein] + H2O = (L-glutamyl)(n)-gamma-L-glutamyl-L-glutamyl-[protein] + L-glutamate. The catalysed reaction is C-terminal L-alpha-aminoacyl-L-glutamyl-[tubulin] + H2O = C-terminal L-alpha-aminoacyl-[tubulin] + L-glutamate. It catalyses the reaction C-terminal L-alpha-aminoacyl-L-glutamyl-L-glutamyl-[tubulin] + H2O = C-terminal L-alpha-aminoacyl-L-glutamyl-[tubulin] + L-glutamate. Its function is as follows. Metallocarboxypeptidase that mediates deglutamylation of tubulin and non-tubulin target proteins. Catalyzes the removal of polyglutamate side chains present on the gamma-carboxyl group of glutamate residues within the C-terminal tail of alpha- and beta-tubulin. Cleaves alpha- and gamma-linked polyglutamate tubulin side-chain, as well as the branching point glutamate. Also catalyzes the removal of alpha-linked glutamate residues from the carboxy-terminus of alpha-tubulin. The chain is Cytosolic carboxypeptidase-like protein 5 (agbl5) from Danio rerio (Zebrafish).